Here is a 73-residue protein sequence, read N- to C-terminus: Structural DNA-binding protein p10 (73 aa).

A disordered region spans residues 1 to 35; sequence MPTKAGTKSTAHKKTTTKGPSKSPKGKTHATALHQ.

The protein belongs to the asfivirus P10 family.

It localises to the virion. Functionally, may play a role in genome packaging through direct interaction with viral DNA. Binds to ssDNA and dsDNA with the same apparent affinity in vitro. This chain is Structural DNA-binding protein p10, found in African swine fever virus (isolate Tick/Malawi/Lil 20-1/1983) (ASFV).